Reading from the N-terminus, the 143-residue chain is Large ribosomal subunit protein uL11 (143 aa).

Belongs to the universal ribosomal protein uL11 family. In terms of assembly, part of the ribosomal stalk of the 50S ribosomal subunit. Interacts with L10 and the large rRNA to form the base of the stalk. L10 forms an elongated spine to which L12 dimers bind in a sequential fashion forming a multimeric L10(L12)X complex. In terms of processing, one or more lysine residues are methylated.

Its function is as follows. Forms part of the ribosomal stalk which helps the ribosome interact with GTP-bound translation factors. The protein is Large ribosomal subunit protein uL11 of Borreliella burgdorferi (strain ATCC 35210 / DSM 4680 / CIP 102532 / B31) (Borrelia burgdorferi).